We begin with the raw amino-acid sequence, 372 residues long: Serine proteinase inhibitor 1 (372 aa).

Belongs to the serpin family. Poxviruses subfamily.

The protein localises to the host cytoplasm. Its function is as follows. Plays a role in mediating viral host range. May act to inhibit a caspase independent form of apoptosis to allow efficient virus replication in infected cells. The protein is Serine proteinase inhibitor 1 (OPG208) of Homo sapiens (Human).